The primary structure comprises 249 residues: ATP synthase subunit a, chloroplastic (249 aa).

5 consecutive transmembrane segments (helical) span residues 40–60 (QVLI…VLAI), 97–117 (VPFI…GALL), 136–156 (INTT…AGLS), 201–221 (LVVV…VMFL), and 222–242 (GLFT…AYIG).

The protein belongs to the ATPase A chain family. F-type ATPases have 2 components, CF(1) - the catalytic core - and CF(0) - the membrane proton channel. CF(1) has five subunits: alpha(3), beta(3), gamma(1), delta(1), epsilon(1). CF(0) has four main subunits: a, b, b' and c.

It is found in the plastid. Its subcellular location is the chloroplast thylakoid membrane. Functionally, key component of the proton channel; it plays a direct role in the translocation of protons across the membrane. In Olimarabidopsis pumila (Dwarf rocket), this protein is ATP synthase subunit a, chloroplastic.